The following is a 240-amino-acid chain: Uridylate kinase (240 aa).

12–15 (KLSG) is an ATP binding site. The involved in allosteric activation by GTP stretch occupies residues 20-25 (GKQGFG). A UMP-binding site is contributed by Gly54. 2 residues coordinate ATP: Gly55 and Arg59. Residues Asp74 and 135–142 (TGNPYFST) each bind UMP. Positions 163, 169, and 172 each coordinate ATP.

It belongs to the UMP kinase family. Homohexamer.

Its subcellular location is the cytoplasm. The enzyme catalyses UMP + ATP = UDP + ADP. The protein operates within pyrimidine metabolism; CTP biosynthesis via de novo pathway; UDP from UMP (UMPK route): step 1/1. Allosterically activated by GTP. Inhibited by UTP. Functionally, catalyzes the reversible phosphorylation of UMP to UDP. This is Uridylate kinase from Geobacillus kaustophilus (strain HTA426).